Reading from the N-terminus, the 485-residue chain is Aspartyl/glutamyl-tRNA(Asn/Gln) amidotransferase subunit B (485 aa).

It belongs to the GatB/GatE family. GatB subfamily. As to quaternary structure, heterotrimer of A, B and C subunits.

The enzyme catalyses L-glutamyl-tRNA(Gln) + L-glutamine + ATP + H2O = L-glutaminyl-tRNA(Gln) + L-glutamate + ADP + phosphate + H(+). It catalyses the reaction L-aspartyl-tRNA(Asn) + L-glutamine + ATP + H2O = L-asparaginyl-tRNA(Asn) + L-glutamate + ADP + phosphate + 2 H(+). Allows the formation of correctly charged Asn-tRNA(Asn) or Gln-tRNA(Gln) through the transamidation of misacylated Asp-tRNA(Asn) or Glu-tRNA(Gln) in organisms which lack either or both of asparaginyl-tRNA or glutaminyl-tRNA synthetases. The reaction takes place in the presence of glutamine and ATP through an activated phospho-Asp-tRNA(Asn) or phospho-Glu-tRNA(Gln). The polypeptide is Aspartyl/glutamyl-tRNA(Asn/Gln) amidotransferase subunit B (Anaplasma marginale (strain St. Maries)).